A 150-amino-acid chain; its full sequence is MKPTPINIKNKRASFDYEFIDTYTAGIVLTGTEIKSIRLGKASLVDTYCYFVQGELWVKNMHIAEYFYGSYNNHSARRERKLLLNKKELRKLEEAGKNPGFTIVPVRLFINEKGLAKLVVALAKGKKQYDKRESLKEKDDRREMDRMFKR.

The segment at 130 to 150 is disordered; the sequence is DKRESLKEKDDRREMDRMFKR.

The protein belongs to the SmpB family.

The protein localises to the cytoplasm. Required for rescue of stalled ribosomes mediated by trans-translation. Binds to transfer-messenger RNA (tmRNA), required for stable association of tmRNA with ribosomes. tmRNA and SmpB together mimic tRNA shape, replacing the anticodon stem-loop with SmpB. tmRNA is encoded by the ssrA gene; the 2 termini fold to resemble tRNA(Ala) and it encodes a 'tag peptide', a short internal open reading frame. During trans-translation Ala-aminoacylated tmRNA acts like a tRNA, entering the A-site of stalled ribosomes, displacing the stalled mRNA. The ribosome then switches to translate the ORF on the tmRNA; the nascent peptide is terminated with the 'tag peptide' encoded by the tmRNA and targeted for degradation. The ribosome is freed to recommence translation, which seems to be the essential function of trans-translation. The polypeptide is SsrA-binding protein (Phocaeicola vulgatus (strain ATCC 8482 / DSM 1447 / JCM 5826 / CCUG 4940 / NBRC 14291 / NCTC 11154) (Bacteroides vulgatus)).